We begin with the raw amino-acid sequence, 693 residues long: CREB-regulated transcription coactivator 2 (693 aa).

The span at M1 to R20 shows a compositional bias: polar residues. The interval M1–K30 is disordered. Residue A2 is modified to N-acetylalanine. The residue at position 51 (R51) is an Asymmetric dimethylarginine; by PRMT6. 3 positions are modified to phosphoserine: S70, S86, and S90. Asymmetric dimethylarginine; by PRMT6 occurs at positions 99, 120, and 123. At S136 the chain carries Phosphoserine. R161 and R168 each carry asymmetric dimethylarginine; by PRMT6. The residue at position 169 (T169) is a Phosphothreonine. At S171 the chain carries Phosphoserine. Residues A174–Y188 show a composition bias toward polar residues. Residues A174–D210 form a disordered region. Positions T209–A215 are required for interaction with COP1. K234 participates in a covalent cross-link: Glycyl lysine isopeptide (Lys-Gly) (interchain with G-Cter in SUMO2). The short motif at T271 to L287 is the Nuclear export signal element. 3 disordered regions span residues T271–T307, H335–L463, and K476–H548. S274 carries the post-translational modification Phosphoserine; by MARK2. S306 is subject to Phosphoserine. A compositionally biased stretch (polar residues) spans S339–N351. Low complexity-rich tracts occupy residues L352 to A378 and S386 to S424. 4 positions are modified to phosphoserine: S368, S393, S433, and S456. A compositionally biased stretch (polar residues) spans S447 to L463. A Phosphotyrosine modification is found at Y488. A phosphoserine mark is found at S489 and S492. At T501 the chain carries Phosphothreonine. Phosphoserine is present on residues S613 and S624.

The protein belongs to the TORC family. As to quaternary structure, binds, as a tetramer, through its N-terminal region, with the bZIP domain of CREB1. 'Arg-314' in the bZIP domain of CREB1 is essential for this interaction. Interaction, via its C-terminal, with TAF4, enhances recruitment of TAF4 to CREB1. Interacts with SIK2. Interacts with 14-3-3 proteins, YWHAB and YWHAG. Interacts (probably when phosphorylated at Ser-171) with YWHAE. Interacts with calmodulin-dependent catalytic subunit PPP3CA/calcineurin A. Interaction with COP1 mediates nuclear export and degradation of CRTC2. Phosphorylation/dephosphorylation states of Ser-171 are required for regulating transduction of CREB activity. CRTCs/TORCs are inactive when phosphorylated, and active when dephosphorylated at this site. This primary site of phosphorylation, is regulated by cAMP and calcium levels and is dependent on the phosphorylation of SIKs (SIK1 and SIK2) by LKB1. Following adenylyl cyclase activation, dephosphorylated at Ser-171 by PPP3CA/calcineurin A resulting in CRTC2 dissociation from 14-3-3 proteins and PPP3CA. Both insulin and AMPK increase this phosphorylation of CRTC2 while glucagon suppresses it. Phosphorylation at Ser-274 by MARK2 is induced under low glucose conditions and dephosphorylated in response to glucose influx. Phosphorylation at Ser-274 promotes interaction with 14-3-3 proteins and translocation to the cytoplasm. Post-translationally, asymmetric dimethylation of arginine resisues by PRMT6 enhances the association of CRTC2 with CREB on the promoters of gluconeogenic genes.

It localises to the cytoplasm. It is found in the nucleus. Transcriptional coactivator for CREB1 which activates transcription through both consensus and variant cAMP response element (CRE) sites. Acts as a coactivator, in the SIK/TORC signaling pathway, being active when dephosphorylated and acts independently of CREB1 'Ser-133' phosphorylation. Enhances the interaction of CREB1 with TAF4. Regulates gluconeogenesis as a component of the LKB1/AMPK/TORC2 signaling pathway. Regulates the expression of specific genes such as the steroidogenic gene, StAR. Potent coactivator of PPARGC1A and inducer of mitochondrial biogenesis in muscle cells. This Bos taurus (Bovine) protein is CREB-regulated transcription coactivator 2 (CRTC2).